We begin with the raw amino-acid sequence, 167 residues long: Phospholipase A2 imperatoxin-1 (167 aa).

3 residues coordinate Ca(2+): Trp38, Gly40, and Gly42. 5 disulfide bridges follow: Cys39–Cys61, Cys60–Cys99, Cys67–Cys92, Cys90–Cys127, and Cys132–Cys144. His64 is an active-site residue. Asp65 contacts Ca(2+). Asn102 carries an N-linked (GlcNAc...) asparagine glycan. Residues 136 to 140 (RRLAR) constitute a propeptide that is removed on maturation.

It belongs to the phospholipase A2 family. Group III subfamily. Heterodimer composed of a large subunit and a small subunit; disulfide-linked. The cofactor is Ca(2+). In terms of tissue distribution, expressed by the venom gland.

It is found in the secreted. It catalyses the reaction a 1,2-diacyl-sn-glycero-3-phosphocholine + H2O = a 1-acyl-sn-glycero-3-phosphocholine + a fatty acid + H(+). Functionally, phospholipase toxin, which may catalyze the calcium-dependent hydrolysis of the 2-acyl groups in 3-sn-phosphoglycerides. Inhibits both skeletal (RYR1) and cardiac (RYR2) ryanodine receptors (calcium release channels). Probably blocks ryanodine receptors by generating a lipid product. The polypeptide is Phospholipase A2 imperatoxin-1 (Pandinus imperator (Emperor scorpion)).